A 444-amino-acid chain; its full sequence is Tubulin beta-8 chain (444 aa).

The MREI motif signature appears at 1-4 (MREI). GTP contacts are provided by Gln-11, Glu-69, Ser-138, Gly-142, Thr-143, and Gly-144. Residue Glu-69 participates in Mg(2+) binding. Ser-172 bears the Phosphoserine; by CDK1 mark. GTP is bound by residues Asn-204 and Asn-226. The residue at position 436 (Glu-436) is a 5-glutamyl polyglutamate.

This sequence belongs to the tubulin family. As to quaternary structure, dimer of alpha and beta chains. A typical microtubule is a hollow water-filled tube with an outer diameter of 25 nm and an inner diameter of 15 nM. Alpha-beta heterodimers associate head-to-tail to form protofilaments running lengthwise along the microtubule wall with the beta-tubulin subunit facing the microtubule plus end conferring a structural polarity. Microtubules usually have 13 protofilaments but different protofilament numbers can be found in some organisms and specialized cells. It depends on Mg(2+) as a cofactor. Some glutamate residues at the C-terminus are polyglycylated, resulting in polyglycine chains on the gamma-carboxyl group. Glycylation is mainly limited to tubulin incorporated into axonemes (cilia and flagella) whereas glutamylation is prevalent in neuronal cells, centrioles, axonemes, and the mitotic spindle. Both modifications can coexist on the same protein on adjacent residues, and lowering polyglycylation levels increases polyglutamylation, and reciprocally. Cilia and flagella glycylation is required for their stability and maintenance. Flagella glycylation controls sperm motility. Post-translationally, some glutamate residues at the C-terminus are polyglutamylated, resulting in polyglutamate chains on the gamma-carboxyl group. Polyglutamylation plays a key role in microtubule severing by spastin (SPAST). SPAST preferentially recognizes and acts on microtubules decorated with short polyglutamate tails: severing activity by SPAST increases as the number of glutamates per tubulin rises from one to eight, but decreases beyond this glutamylation threshold. Glutamylation is also involved in cilia motility. In terms of processing, phosphorylated on Ser-172 by CDK1 during the cell cycle, from metaphase to telophase, but not in interphase. This phosphorylation inhibits tubulin incorporation into microtubules.

It is found in the cytoplasm. Its subcellular location is the cytoskeleton. It localises to the spindle. Its function is as follows. Tubulin is the major constituent of microtubules, a cylinder consisting of laterally associated linear protofilaments composed of alpha- and beta-tubulin heterodimers. Microtubules grow by the addition of GTP-tubulin dimers to the microtubule end, where a stabilizing cap forms. Below the cap, tubulin dimers are in GDP-bound state, owing to GTPase activity of alpha-tubulin. Has a key role in meiotic spindle assembly and oocyte maturation. The sequence is that of Tubulin beta-8 chain (TUBB8) from Papio hamadryas (Hamadryas baboon).